The following is a 390-amino-acid chain: Galactokinase (390 aa).

34–37 (EHTD) lines the substrate pocket. ATP contacts are provided by residues serine 68 and 122–128 (GSGLSSS). Residues serine 128 and glutamate 160 each coordinate Mg(2+). The Proton acceptor role is filled by aspartate 172. Tyrosine 221 contributes to the substrate binding site.

This sequence belongs to the GHMP kinase family. GalK subfamily.

The protein resides in the cytoplasm. The catalysed reaction is alpha-D-galactose + ATP = alpha-D-galactose 1-phosphate + ADP + H(+). Its pathway is carbohydrate metabolism; galactose metabolism. Its function is as follows. Catalyzes the transfer of the gamma-phosphate of ATP to D-galactose to form alpha-D-galactose-1-phosphate (Gal-1-P). The protein is Galactokinase of Chloroflexus aurantiacus (strain ATCC 29366 / DSM 635 / J-10-fl).